The following is a 277-amino-acid chain: MTTDSLALDFKSATLYAIRVVLHDADLDRLTAALDQRMADAGSFFENEPVVVDASRVDDPIDWPALLAALRGHNLPPIGVVAEGANLAAAQAAGLAAVELSTPPARPAPAVETAPPNDAATPVPAVPAAALETGASATTGNAPAEPAPAEPAAPAAAPQPPAVPAPASALVITKPLRSGQRVYARHTDLVVIGMVSQGAEVIADGNVHVYGPLRGKAMAGARGDTSARIFTTQLDAELLAVAGVYRVVEDKLDSTLHNQPALVYLDGETLRVEALKR.

Residues 137–164 form a disordered region; the sequence is ATTGNAPAEPAPAEPAAPAAAPQPPAVP. Over residues 145–164 the composition is skewed to pro residues; sequence EPAPAEPAAPAAAPQPPAVP.

This sequence belongs to the MinC family. As to quaternary structure, interacts with MinD and FtsZ.

Its function is as follows. Cell division inhibitor that blocks the formation of polar Z ring septums. Rapidly oscillates between the poles of the cell to destabilize FtsZ filaments that have formed before they mature into polar Z rings. Prevents FtsZ polymerization. The polypeptide is Probable septum site-determining protein MinC (Bordetella petrii (strain ATCC BAA-461 / DSM 12804 / CCUG 43448)).